A 100-amino-acid chain; its full sequence is Aspartyl/glutamyl-tRNA(Asn/Gln) amidotransferase subunit C (100 aa).

Belongs to the GatC family. In terms of assembly, heterotrimer of A, B and C subunits.

The enzyme catalyses L-glutamyl-tRNA(Gln) + L-glutamine + ATP + H2O = L-glutaminyl-tRNA(Gln) + L-glutamate + ADP + phosphate + H(+). The catalysed reaction is L-aspartyl-tRNA(Asn) + L-glutamine + ATP + H2O = L-asparaginyl-tRNA(Asn) + L-glutamate + ADP + phosphate + 2 H(+). In terms of biological role, allows the formation of correctly charged Asn-tRNA(Asn) or Gln-tRNA(Gln) through the transamidation of misacylated Asp-tRNA(Asn) or Glu-tRNA(Gln) in organisms which lack either or both of asparaginyl-tRNA or glutaminyl-tRNA synthetases. The reaction takes place in the presence of glutamine and ATP through an activated phospho-Asp-tRNA(Asn) or phospho-Glu-tRNA(Gln). The sequence is that of Aspartyl/glutamyl-tRNA(Asn/Gln) amidotransferase subunit C from Herminiimonas arsenicoxydans.